Consider the following 1054-residue polypeptide: MRKTLPSIGALGFSNTNAEKDLCCLGWYSNDPDTVVDAPEQAAEILWHLSGTADPDLALNTIIRLMEALGEQKGQLHNALRTDPELRVKLFSLLGASTALGDHLVAHPHTWPELQRPMPTRQEMFRLMLGSVGAARASFSSESQQPQGSDSDSEFSFGADLSADDTANTDLSTPGTYRAEITGERAEVALKTTYRSLLLRIAAADLAGTYPEDIHRTGLPEVPFVTVTKALADLADAALTAALAVAVAHVYPEGEVDTHLAVMAMGKCGAQELNYISDVDVIFVAEPVTPKAIRLAGEFIRIGCACFFEVDAALRPEGKHGVLVRTLDSHVAYYKRWAETWEFQALLKHRPMTGYMPLGQAYSEKLQPMVWEASQRESFVDNVQRMRRRVLENVPAKLKNLELKLGEGGLRDVEFAVQLLQLVHGRSDESLRTLSTIDALNALIEGGYVGREDGAELIRAYEFLRLLEHRLQLQKVKRTHTMPEATKTKQLRWLARAAGFKTSKLASATDEMNAMLKTSRLHISSLHRKLFYRPLLDSVVNISVGTLKLSPAAAKLQLAALGYVFPDRAMDHLHALAAGGSRKAKIQAMLLPTLMEWLSETAEPDAGLLNYRKLSDAAYDRTWFLRMLRDEGVVGQRLMRILGNSPYTADLIISAPDIVKQLGDGATRPKLLETSEDRVTKSIVAAAARHDDPDVAIAVARSLRRAELARIASADLLQMLSVQQVCRRLSYVWDAVLEAGLQAEIRASLIGSTGDKNSVPPARIAVIGMGRLGGSELGYGSDADVMFVCEPTEGVSDEAAVKWAIGVCDSMRSRLAKPSGDPPLDVDLGLRPEGRSGAVVRTLESYKQYYERWGEVWEIQALLRADFIAGDQELGARFLEMIEPLRYPEAGVSQKVIREVRRMKARVDNERLPRGADRNTHTKLGRGALTDVEWTVQLLTMMHAHEFQDLHNPSTLDSLDVIEKHAVIEPEKVEVLRQAWLTATRARNAIVLVRGKRVDQLPQQGTQLAAVAGAAGWEPSDSQQYLDHYLKVTRRARQVVDEVFWGVDSIEHDY.

The segment at 1 to 535 (MRKTLPSIGA…LHRKLFYRPL (535 aa)) is adenylyl removase. Composition is skewed to polar residues over residues 138–150 (SFSS…QGSD) and 165–175 (DTANTDLSTPG). The tract at residues 138–175 (SFSSESQQPQGSDSDSEFSFGADLSADDTANTDLSTPG) is disordered. Positions 541–1054 (NISVGTLKLS…WGVDSIEHDY (514 aa)) are adenylyl transferase.

The protein belongs to the GlnE family. The cofactor is Mg(2+).

The enzyme catalyses [glutamine synthetase]-O(4)-(5'-adenylyl)-L-tyrosine + phosphate = [glutamine synthetase]-L-tyrosine + ADP. It catalyses the reaction [glutamine synthetase]-L-tyrosine + ATP = [glutamine synthetase]-O(4)-(5'-adenylyl)-L-tyrosine + diphosphate. Involved in the regulation of glutamine synthetase GlnA, a key enzyme in the process to assimilate ammonia. When cellular nitrogen levels are high, the C-terminal adenylyl transferase (AT) inactivates GlnA by covalent transfer of an adenylyl group from ATP to specific tyrosine residue of GlnA, thus reducing its activity. Conversely, when nitrogen levels are low, the N-terminal adenylyl removase (AR) activates GlnA by removing the adenylyl group by phosphorolysis, increasing its activity. The regulatory region of GlnE binds the signal transduction protein PII (GlnB) which indicates the nitrogen status of the cell. This chain is Bifunctional glutamine synthetase adenylyltransferase/adenylyl-removing enzyme, found in Corynebacterium diphtheriae (strain ATCC 700971 / NCTC 13129 / Biotype gravis).